Reading from the N-terminus, the 535-residue chain is MATCIWLRSCGARRLGSTFPGCRLRPRAGGLVPASGPAPGPAQLRCYAGRLAGLSAALLRTDSFVGGRWLPAAATFPVQDPASGAALGMVADCGVREARAAVRAAYEAFCRWREVSAKERSSLLRKWYNLMIQNKDDLARIITAESGKPLKEAHGEILYSAFFLEWFSEEARRVYGDIIHTPAKDRRALVLKQPIGVAAVITPWNFPSAMITRKVGAALAAGCTVVVKPAEDTPFSALALAELASQAGIPSGVYNVIPCSRKNAKEVGEAICTDPLVSKISFTGSTTTGKILLHHAANSVKRVSMELGGLAPFIVFDSANVDQAVAGAMASKFRNTGQTCVCSNQFLVQRGIHDAFVKAFAEAMKKNLRVGNGFEEGTTQGPLINEKAVEKVEKQVNDAVSKGATVVTGGKRHQLGKNFFEPTLLCNVTQDMLCTHEETFGPLAPVIKFDTEEEAIAIANAADVGLAGYFYSQDPAQIWRVAEQLEVGMVGVNEGLISSVECPFGGVKQSGLGREGSKYGIDEYLELKYVCYGGL.

The N-terminal 47 residues, 1 to 47 (MATCIWLRSCGARRLGSTFPGCRLRPRAGGLVPASGPAPGPAQLRCY), are a transit peptide targeting the mitochondrion. Lysine 126 is subject to N6-acetyllysine; alternate. Residue lysine 126 is modified to N6-succinyllysine; alternate. 2 positions are modified to N6-succinyllysine: lysine 135 and lysine 184. Position 202-204 (202-204 (TPW)) interacts with NAD(+). Residue arginine 213 participates in substrate binding. 228–231 (KPAE) is an NAD(+) binding site. Lysine 265 is modified (N6-acetyllysine; alternate). N6-succinyllysine; alternate is present on lysine 265. NAD(+) contacts are provided by residues 284-289 (GSTTTG) and glutamate 306. The active-site Proton acceptor is glutamate 306. Arginine 334 serves as a coordination point for substrate. Catalysis depends on cysteine 340, which acts as the Nucleophile. Cysteine 340 and cysteine 342 are disulfide-bonded. Lysine 365 is subject to N6-acetyllysine. The residue at position 402 (lysine 402) is an N6-succinyllysine. The residue at position 411 (lysine 411) is an N6-acetyllysine. An NAD(+)-binding site is contributed by 438-440 (ETF). Residue serine 498 coordinates substrate. A Phosphoserine modification is found at serine 499.

Belongs to the aldehyde dehydrogenase family. Homotetramer. As to expression, brain, pancreas, heart, liver, skeletal muscle and kidney. Lower in placenta.

Its subcellular location is the mitochondrion. The enzyme catalyses succinate semialdehyde + NAD(+) + H2O = succinate + NADH + 2 H(+). It functions in the pathway amino-acid degradation; 4-aminobutanoate degradation. Redox-regulated. Inhibited under oxydizing conditions. Inhibited by hydrogen peroxide H(2)O(2). Catalyzes one step in the degradation of the inhibitory neurotransmitter gamma-aminobutyric acid (GABA). This is Succinate-semialdehyde dehydrogenase, mitochondrial from Homo sapiens (Human).